The following is a 237-amino-acid chain: Demethylmenaquinone methyltransferase (237 aa).

Residues Thr58, Asp79, and 107 to 108 (NA) each bind S-adenosyl-L-methionine.

The protein belongs to the class I-like SAM-binding methyltransferase superfamily. MenG/UbiE family.

It carries out the reaction a 2-demethylmenaquinol + S-adenosyl-L-methionine = a menaquinol + S-adenosyl-L-homocysteine + H(+). The protein operates within quinol/quinone metabolism; menaquinone biosynthesis; menaquinol from 1,4-dihydroxy-2-naphthoate: step 2/2. Methyltransferase required for the conversion of demethylmenaquinol (DMKH2) to menaquinol (MKH2). The chain is Demethylmenaquinone methyltransferase from Lactiplantibacillus plantarum (strain ATCC BAA-793 / NCIMB 8826 / WCFS1) (Lactobacillus plantarum).